The sequence spans 435 residues: Exopolysaccharide production protein ExoQ (435 aa).

A run of 10 helical transmembrane segments spans residues 11–31 (PGAN…VFAY), 35–55 (FGQV…LVDY), 65–85 (YLWI…SAAP), 117–137 (GMIA…TYHY), 156–176 (LGFY…VLGE), 178–198 (GLWM…LLTS), 203–223 (SVLT…ITAL), 230–250 (LLFI…IYAG), 325–345 (VVET…TAFF), and 361–381 (MVLF…IDIL).

It is found in the cell membrane. The protein operates within glycan metabolism; exopolysaccharide biosynthesis. Functionally, involved in the production of exopolysaccharide. The chain is Exopolysaccharide production protein ExoQ (exoQ) from Rhizobium meliloti (strain 1021) (Ensifer meliloti).